A 406-amino-acid chain; its full sequence is Testis-specific Y-encoded-like protein 5 (406 aa).

The segment covering 1-25 has biased composition (basic residues); it reads MSGRSRGRKSSRAKGRGKGRARARV. 3 disordered regions span residues 1-67, 132-164, and 382-406; these read MSGR…PAEL, IGNR…PKMA, and RGEK…RQPN. A compositionally biased stretch (basic and acidic residues) spans 27 to 38; sequence AAAEDAWHDEKP. Residues 49-62 show a composition bias toward low complexity; the sequence is AAAQVQAGAAQGGA. Positions 382–392 are enriched in basic and acidic residues; the sequence is RGEKGKEERPG.

This sequence belongs to the nucleosome assembly protein (NAP) family. In terms of assembly, interacts with USP7.

Its function is as follows. Involved in modulation of cell growth and cellular response to gamma radiation probably via regulation of the Akt signaling pathway. Involved in regulation of p53/TP53. Suppresses p53/TP53 protein levels and promotes its ubiquitination; the function is dependent on USP7 and independent on MDM2. Proposed to displace p53/TP53 from interaction with USP7. This Mus musculus (Mouse) protein is Testis-specific Y-encoded-like protein 5 (Tspyl5).